The primary structure comprises 191 residues: Guanylate kinase (191 aa).

Positions 6–184 (GLIIILSSPS…TIQQIHTIIL (179 aa)) constitute a Guanylate kinase-like domain. 13-20 (SPSGAGKS) is an ATP binding site.

This sequence belongs to the guanylate kinase family.

It is found in the cytoplasm. The enzyme catalyses GMP + ATP = GDP + ADP. In terms of biological role, essential for recycling GMP and indirectly, cGMP. This is Guanylate kinase from Rickettsia bellii (strain RML369-C).